Reading from the N-terminus, the 146-residue chain is Ecotin-like protein 1 (146 aa).

It belongs to the protease inhibitor I11 (ecotin) family.

This chain is Ecotin-like protein 1 (ISP1), found in Leishmania major.